Consider the following 344-residue polypeptide: D-arabinose dehydrogenase [NAD(P)+] heavy chain (344 aa).

Tyr71 acts as the Proton donor in catalysis. Substrate is bound at residue His131. Residue Thr151 is modified to Phosphothreonine. NADP(+) is bound at residue 241–295 (SPLGSHGAPNLKIPLVKKLAEKYNVTGNDLLISYHIRQGTIVIPRSLNPVRISSS).

It belongs to the aldo/keto reductase family. In terms of assembly, heterodimer of a heavy chain and a light chain.

It is found in the cytoplasm. The catalysed reaction is D-arabinose + NADP(+) = D-arabinono-1,4-lactone + NADPH + H(+). It carries out the reaction D-arabinose + NAD(+) = D-arabinono-1,4-lactone + NADH + H(+). Catalyzes the oxidation of D-arabinose, L-xylose, L-fucose and L-galactose in the presence of NADP(+). In Saccharomyces cerevisiae (strain ATCC 204508 / S288c) (Baker's yeast), this protein is D-arabinose dehydrogenase [NAD(P)+] heavy chain (ARA1).